An 81-amino-acid polypeptide reads, in one-letter code: Small ribosomal subunit protein bS16 (81 aa).

Belongs to the bacterial ribosomal protein bS16 family.

In Clostridium perfringens (strain ATCC 13124 / DSM 756 / JCM 1290 / NCIMB 6125 / NCTC 8237 / Type A), this protein is Small ribosomal subunit protein bS16.